The chain runs to 207 residues: dTTP/UTP pyrophosphatase (207 aa).

Asp-79 functions as the Proton acceptor in the catalytic mechanism.

It belongs to the Maf family. YhdE subfamily. A divalent metal cation serves as cofactor.

The protein localises to the cytoplasm. It carries out the reaction dTTP + H2O = dTMP + diphosphate + H(+). It catalyses the reaction UTP + H2O = UMP + diphosphate + H(+). In terms of biological role, nucleoside triphosphate pyrophosphatase that hydrolyzes dTTP and UTP. May have a dual role in cell division arrest and in preventing the incorporation of modified nucleotides into cellular nucleic acids. The sequence is that of dTTP/UTP pyrophosphatase from Rhodopseudomonas palustris (strain BisB5).